The primary structure comprises 483 residues: Spermatogenesis-defective protein 39 homolog (483 aa).

The protein belongs to the SPE39 family. Interacts with vps33b. In terms of tissue distribution, high levels detected in liver and small intestine of larvae at 5 days post-fertilization.

The protein localises to the cytoplasm. The protein resides in the cytoplasmic vesicle. Its subcellular location is the early endosome. It is found in the recycling endosome. It localises to the late endosome. In terms of biological role, proposed to be involved in endosomal maturation implicating in part vps33b. In epithelial cells, the vps33b:vipas39 complex may play a role in the apical rab11a-dependent recycling pathway and in the maintenance of the apical-basolateral polarity. May play a role in lysosomal trafficking, probably via association with the core HOPS complex in a discrete population of endosomes; the functions seems to be independent of vps33b. May play a role in vesicular trafficking during spermatogenesis. May be involved in direct or indirect transcriptional regulation of E-cadherin. This chain is Spermatogenesis-defective protein 39 homolog (vipas39), found in Danio rerio (Zebrafish).